A 547-amino-acid polypeptide reads, in one-letter code: Chaperonin GroEL (547 aa).

ATP-binding positions include T30–P33, K51, D87–T91, G416, N480–A482, and D496.

The protein belongs to the chaperonin (HSP60) family. As to quaternary structure, forms a cylinder of 14 subunits composed of two heptameric rings stacked back-to-back. Interacts with the co-chaperonin GroES.

The protein localises to the cytoplasm. The catalysed reaction is ATP + H2O + a folded polypeptide = ADP + phosphate + an unfolded polypeptide.. Together with its co-chaperonin GroES, plays an essential role in assisting protein folding. The GroEL-GroES system forms a nano-cage that allows encapsulation of the non-native substrate proteins and provides a physical environment optimized to promote and accelerate protein folding. The sequence is that of Chaperonin GroEL from Pseudoalteromonas translucida (strain TAC 125).